A 170-amino-acid polypeptide reads, in one-letter code: IMPACT family member YDL177C (170 aa).

Residues 79–98 (KKKGNKANKSNNSHVNKSRN) are disordered.

This sequence belongs to the IMPACT family.

This is IMPACT family member YDL177C from Saccharomyces cerevisiae (strain ATCC 204508 / S288c) (Baker's yeast).